Reading from the N-terminus, the 98-residue chain is Co-chaperonin GroES (98 aa).

The interval 32-56 is disordered; that stretch reads NAKEKPQQGEVLAVGPGRRDDEGKR.

Belongs to the GroES chaperonin family. Heptamer of 7 subunits arranged in a ring. Interacts with the chaperonin GroEL.

The protein resides in the cytoplasm. Functionally, together with the chaperonin GroEL, plays an essential role in assisting protein folding. The GroEL-GroES system forms a nano-cage that allows encapsulation of the non-native substrate proteins and provides a physical environment optimized to promote and accelerate protein folding. GroES binds to the apical surface of the GroEL ring, thereby capping the opening of the GroEL channel. The chain is Co-chaperonin GroES from Bifidobacterium animalis subsp. lactis (strain AD011).